The chain runs to 128 residues: Flagellar basal body rod protein FlgB (128 aa).

It belongs to the flagella basal body rod proteins family. The basal body constitutes a major portion of the flagellar organelle and consists of a number of rings mounted on a central rod. In Gram-negative bacteria, at least four rings, L, P, S and M are present, whereas Gram-positive bacteria lack the L and P rings. The rod consists of about 26 subunits of FlgG in the distal portion, and FlgB, FlgC and FlgF build up the proximal portion of the rod with about 6 subunits each. Rod assembly occurs by export via the flagellum-specific pathway of its constituent proteins and by their incorporation into the rod structure in the probable order of FlgB, FlgC, FlgF and FlgG. Another protein, FliE, also assembles onto the stable rod structure.

The protein localises to the bacterial flagellum basal body. Structural component of flagellum, the bacterial motility apparatus. Part of the rod structure of flagellar basal body. The chain is Flagellar basal body rod protein FlgB from Cereibacter sphaeroides (Rhodobacter sphaeroides).